The primary structure comprises 261 residues: Acetylglutamate kinase (261 aa).

Substrate contacts are provided by residues Gly-48–Gly-49, Arg-70, and Asn-164.

The protein belongs to the acetylglutamate kinase family. ArgB subfamily.

Its subcellular location is the cytoplasm. The catalysed reaction is N-acetyl-L-glutamate + ATP = N-acetyl-L-glutamyl 5-phosphate + ADP. It participates in amino-acid biosynthesis; L-arginine biosynthesis; N(2)-acetyl-L-ornithine from L-glutamate: step 2/4. Catalyzes the ATP-dependent phosphorylation of N-acetyl-L-glutamate. The chain is Acetylglutamate kinase from Roseiflexus sp. (strain RS-1).